Reading from the N-terminus, the 791-residue chain is MSRRRHSDENDGGPHHKRRKTSEPLEIEDRLESLICRVGEKSTSSLESNLEGLAGVLEADLPNYKSKILRILCSVARTLPEKMTVYTTLVGLLNARNYNFGGEFVEAMIRHLKETIKLNAYNEAVYLVRFLCDLVNCHVIAAPSMVAMFESFVGVTQEEDIPQVRSDWYVYAVLSSLPWVGKELYEKKDVEMDRILSQIEAYLKQRQKLHVSILQVWSAEKPHPQEEYLDCLWAQIQKLKKDRWQERHILRPYLAFDSVLCEALQHNLPPFTPPPHTEDSVYPVPRVVFRMFDYTDAPEGPVMPGSHSVERFVIEENLHCILRSHWRERKTCAAQLLSYPEKNKIPLNYHIVEVIFGELFQLPNPPHLDVMYTTLLIELCKLQPGSLPQVLAQASEMLYTRLDTMNTICIDRFINWFSHHLSNFQFRWNWEDWSDCLSQDLDKPKPQFVREVLEKCMRLSYHQRILDIVPAAFSALYPASPSCVFKYGDESNSALPGYSVAVALTNAIKNKASDKEIFNILKDIPNPNQDDDDDEGISFNPLKIEVFVQTLLSLASKSFSHSFSALAKFHDIFKALSESDEGKLHILRVVYDIWKNHPQMIAVLVDKMIRTQIVDCAAVANWIFSPELSRDFPRFYIWEILHSTIRKMNKHVQKIQKELEDMKLRLAKQHKHRDSDDNDEDSGRKDGPLEEQIERLQEKVESAQSEQKNLFLVIFQRFIMILTEHLVRCETGGIDVNTAWYKNCRERLQQIFLQHHQIIQQYMVTLENLLFTAELDHHILTVFQQFCALQS.

A compositionally biased stretch (basic and acidic residues) spans 1–14; it reads MSRRRHSDENDGGP. A disordered region spans residues 1–24; the sequence is MSRRRHSDENDGGPHHKRRKTSEP. The MIF4G domain occupies 28 to 240; that stretch reads EDRLESLICR…CLWAQIQKLK (213 aa). Positions 641–714 form a coiled coil; the sequence is LHSTIRKMNK…SEQKNLFLVI (74 aa). The tract at residues 668–687 is disordered; the sequence is KQHKHRDSDDNDEDSGRKDG.

The protein belongs to the NCBP1 family. As to quaternary structure, component of the nuclear cap-binding complex (CBC), a heterodimer composed of ncbp1/cbp80 and ncbp2/cbp20 that interacts with m7GpppG-capped RNA. Component of an alternative nuclear cap-binding complex (CBC) composed of ncbp1/cbp80 and ncbp3.

The protein resides in the nucleus. The protein localises to the cytoplasm. Its function is as follows. Component of the cap-binding complex (CBC), which binds cotranscriptionally to the 5'-cap of pre-mRNAs and is involved in various processes such as pre-mRNA splicing, translation regulation, nonsense-mediated mRNA decay, RNA-mediated gene silencing (RNAi) by microRNAs (miRNAs) and mRNA export. The CBC complex is involved in mRNA export from the nucleus, leading to the recruitment of the mRNA export machinery to the 5'-end of mRNA and to mRNA export in a 5' to 3' direction through the nuclear pore. The CBC complex is also involved in mediating U snRNA and intronless mRNAs export from the nucleus. The CBC complex is essential for a pioneer round of mRNA translation, before steady state translation when the CBC complex is replaced by cytoplasmic cap-binding protein eIF4E. The pioneer round of mRNA translation mediated by the CBC complex plays a central role in nonsense-mediated mRNA decay (NMD), NMD only taking place in mRNAs bound to the CBC complex, but not on eIF4E-bound mRNAs. The CBC complex enhances NMD in mRNAs containing at least one exon-junction complex (EJC), promoting the interaction between UPF1 and UPF2. The CBC complex is also involved in 'failsafe' NMD, which is independent of the EJC complex, while it does not participate in Staufen-mediated mRNA decay (SMD). During cell proliferation, the CBC complex is also involved in microRNAs (miRNAs) biogenesis via its interaction with SRRT/ARS2 and is required for miRNA-mediated RNA interference. The CBC complex also acts as a negative regulator of parn, thereby acting as an inhibitor of mRNA deadenylation. In the CBC complex, ncbp1/cbp80 does not bind directly capped RNAs (m7GpppG-capped RNA) but is required to stabilize the movement of the N-terminal loop of ncbp2/cbp20 and lock the CBC into a high affinity cap-binding state with the cap structure. Associates with NCBP3 to form an alternative cap-binding complex (CBC) which plays a key role in mRNA export. The conventional CBC with NCBP2 binds both small nuclear RNA (snRNA) and messenger (mRNA) and is involved in their export from the nucleus whereas the alternative CBC with NCBP3 does not bind snRNA and associates only with mRNA thereby playing a role only in mRNA export. This is Nuclear cap-binding protein subunit 1 (ncbp1) from Xenopus tropicalis (Western clawed frog).